The chain runs to 319 residues: Acetyl esterase (319 aa).

The Involved in the stabilization of the negatively charged intermediate by the formation of the oxyanion hole motif lies at His-91–Gly-93. Active-site residues include Ser-165, Asp-262, and His-292.

Belongs to the 'GDXG' lipolytic enzyme family. Homodimer. Interacts with MalT and MelA.

It is found in the cytoplasm. Its function is as follows. Displays esterase activity towards short chain fatty esters (acyl chain length of up to 8 carbons). Able to hydrolyze triacetylglycerol (triacetin) and tributyrylglycerol (tributyrin), but not trioleylglycerol (triolein) or cholesterol oleate. Negatively regulates MalT activity by antagonizing maltotriose binding. Inhibits MelA galactosidase activity. This Escherichia coli O8 (strain IAI1) protein is Acetyl esterase.